Here is a 287-residue protein sequence, read N- to C-terminus: Isopentenyl-diphosphate Delta-isomerase 1, chloroplastic (287 aa).

The N-terminal 51 residues, 1-51 (MTLLLNTTAKLYIAPRTLPFTSSSTFARSPFLRIPSLLKPLSPLTARVSLS), are a transit peptide targeting the chloroplast. Residue lysine 90 participates in substrate binding. Residues histidine 94 and histidine 106 each contribute to the Mg(2+) site. Residues 104 to 256 (LLHRAFSVFL…GLKLSPWFRL (153 aa)) enclose the Nudix hydrolase domain. Residues arginine 125 and lysine 129 each coordinate substrate. Residue cysteine 141 is part of the active site. Serine 142 contributes to the substrate binding site. Positions 142–172 (SHPLYRESELIDEESLGARNAAQRKLLDELG) match the Nudix box motif. Glutamate 201 and glutamate 203 together coordinate Mg(2+). Residue glutamate 203 is part of the active site.

This sequence belongs to the IPP isomerase type 1 family. As to quaternary structure, monomer. The cofactor is Mg(2+). Mainly expressed in roots and trichomes and, to a lower extent, in leaves, flowers and stems.

Its subcellular location is the plastid. The protein resides in the chloroplast. It catalyses the reaction isopentenyl diphosphate = dimethylallyl diphosphate. Its pathway is isoprenoid biosynthesis; dimethylallyl diphosphate biosynthesis; dimethylallyl diphosphate from isopentenyl diphosphate: step 1/1. It participates in porphyrin-containing compound metabolism; chlorophyll biosynthesis. Its function is as follows. Catalyzes the 1,3-allylic rearrangement of the homoallylic substrate isopentenyl (IPP) to its highly electrophilic allylic isomer, dimethylallyl diphosphate (DMAPP). The protein is Isopentenyl-diphosphate Delta-isomerase 1, chloroplastic of Cannabis sativa (Hemp).